The primary structure comprises 181 residues: Thioredoxin M-type, chloroplastic (181 aa).

A chloroplast-targeting transit peptide spans 1-67 (MAIENCLQLS…RQFRYSSVVC (67 aa)). Positions 68–180 (KASEAVKEVQ…LTDSIEKYLS (113 aa)) constitute a Thioredoxin domain. Residues C104 and C107 each act as nucleophile in the active site. Residues C104 and C107 are joined by a disulfide bond.

Belongs to the thioredoxin family. Plant M-type subfamily. Forms a complex with heterodimeric ferredoxin-thioredoxin reductase (FTR) and ferredoxin.

Its subcellular location is the plastid. It is found in the chloroplast. Functionally, participates in various redox reactions through the reversible oxidation of the active center dithiol to a disulfide. The M form is known to activate NADP-malate dehydrogenase. This chain is Thioredoxin M-type, chloroplastic, found in Spinacia oleracea (Spinach).